We begin with the raw amino-acid sequence, 123 residues long: Small ribosomal subunit protein uS12cz/uS12cy (123 aa).

Belongs to the universal ribosomal protein uS12 family. Part of the 30S ribosomal subunit.

The protein resides in the plastid. Its subcellular location is the chloroplast. Functionally, with S4 and S5 plays an important role in translational accuracy. Located at the interface of the 30S and 50S subunits. In Glycine max (Soybean), this protein is Small ribosomal subunit protein uS12cz/uS12cy (rps12-A).